The following is a 493-amino-acid chain: MTALNELTLAEARDGLKAKDFSAREIAQAHLDAIDRAKALNAYIVATPDRALKMAEVSDQKIAKGEARPLEGLPLGIKDLFATQGVDTTAGSKILEGFEPHYESNVSSQLWRDGAVMLGKLNLDEFAMGSSNETSAYGKTISPWRRQGSYAPLVPGGSSGGSAAAVAAHLCLGATATDTGGSIRQPAAFTGTVGIKPTYGRCSRWGIIAYASSLDQAGPIARTVQDCAILLGSMAGHDPRDTTSVDMPVPDFEAAISRGVKGLTIGIPKEYRVEGMPAEIQRLWDQGADWLREAGATIKEISLPHTQYALPAYYIVAPAEASSNLARYDGVRYGLRVPGKDIAGMYENTRAAGFGREVKRRIMIGTYVLSAGYYDAYYVRAQKIRTLIKRDFEAAYASGVDAILTPATPSAAFGIGEMASADPVEMYLNDVFTVTVNMAGLPGISVPAGLDAQGLPLGLQLIGRPFDEETLFAAAQTIENAAGRISLPKAWWA.

Catalysis depends on charge relay system residues Lys78 and Ser158. Catalysis depends on Ser182, which acts as the Acyl-ester intermediate.

The protein belongs to the amidase family. GatA subfamily. Heterotrimer of A, B and C subunits.

The enzyme catalyses L-glutamyl-tRNA(Gln) + L-glutamine + ATP + H2O = L-glutaminyl-tRNA(Gln) + L-glutamate + ADP + phosphate + H(+). Its function is as follows. Allows the formation of correctly charged Gln-tRNA(Gln) through the transamidation of misacylated Glu-tRNA(Gln) in organisms which lack glutaminyl-tRNA synthetase. The reaction takes place in the presence of glutamine and ATP through an activated gamma-phospho-Glu-tRNA(Gln). The polypeptide is Glutamyl-tRNA(Gln) amidotransferase subunit A (Methylorubrum extorquens (strain PA1) (Methylobacterium extorquens)).